Consider the following 240-residue polypeptide: Phosphatidylserine decarboxylase proenzyme (240 aa).

Residue Ser209 is the Schiff-base intermediate with substrate; via pyruvic acid of the active site. Pyruvic acid (Ser); by autocatalysis is present on Ser209.

The protein belongs to the phosphatidylserine decarboxylase family. PSD-A subfamily. As to quaternary structure, heterodimer of a large membrane-associated beta subunit and a small pyruvoyl-containing alpha subunit. It depends on pyruvate as a cofactor. In terms of processing, is synthesized initially as an inactive proenzyme. Formation of the active enzyme involves a self-maturation process in which the active site pyruvoyl group is generated from an internal serine residue via an autocatalytic post-translational modification. Two non-identical subunits are generated from the proenzyme in this reaction, and the pyruvate is formed at the N-terminus of the alpha chain, which is derived from the carboxyl end of the proenzyme. The post-translation cleavage follows an unusual pathway, termed non-hydrolytic serinolysis, in which the side chain hydroxyl group of the serine supplies its oxygen atom to form the C-terminus of the beta chain, while the remainder of the serine residue undergoes an oxidative deamination to produce ammonia and the pyruvoyl prosthetic group on the alpha chain.

It localises to the cell membrane. The catalysed reaction is a 1,2-diacyl-sn-glycero-3-phospho-L-serine + H(+) = a 1,2-diacyl-sn-glycero-3-phosphoethanolamine + CO2. The protein operates within phospholipid metabolism; phosphatidylethanolamine biosynthesis; phosphatidylethanolamine from CDP-diacylglycerol: step 2/2. Its function is as follows. Catalyzes the formation of phosphatidylethanolamine (PtdEtn) from phosphatidylserine (PtdSer). The protein is Phosphatidylserine decarboxylase proenzyme of Mycobacterium avium (strain 104).